A 298-amino-acid polypeptide reads, in one-letter code: DNA-binding transcriptional activator HetR (298 aa).

Ser-152 is an active-site residue.

This sequence belongs to the peptidase S48 family. As to quaternary structure, homodimer; disulfide-linked.

In terms of biological role, controls heterocyst differentiation. Dimerization is required for DNA-binding. Has both a protease and a DNA-binding activity. The chain is DNA-binding transcriptional activator HetR from Nostoc sp. (strain PCC 9229).